Consider the following 371-residue polypeptide: Chaperone protein DnaJ (371 aa).

Residues 5–69 form the J domain; sequence DYYEVLGLSK…QKRAQYDQFG (65 aa). The CR-type zinc finger occupies 133–215; the sequence is GKELNVEIPV…CHGSGKVRKR (83 aa). Cys146, Cys149, Cys163, Cys166, Cys189, Cys192, Cys203, and Cys206 together coordinate Zn(2+). 4 CXXCXGXG motif repeats span residues 146–153, 163–170, 189–196, and 203–210; these read CDTCKGSG, CKHCSGSG, CSHCSGTG, and CTTCHGSG.

Belongs to the DnaJ family. Homodimer. It depends on Zn(2+) as a cofactor.

The protein resides in the cytoplasm. In terms of biological role, participates actively in the response to hyperosmotic and heat shock by preventing the aggregation of stress-denatured proteins and by disaggregating proteins, also in an autonomous, DnaK-independent fashion. Unfolded proteins bind initially to DnaJ; upon interaction with the DnaJ-bound protein, DnaK hydrolyzes its bound ATP, resulting in the formation of a stable complex. GrpE releases ADP from DnaK; ATP binding to DnaK triggers the release of the substrate protein, thus completing the reaction cycle. Several rounds of ATP-dependent interactions between DnaJ, DnaK and GrpE are required for fully efficient folding. Also involved, together with DnaK and GrpE, in the DNA replication of plasmids through activation of initiation proteins. The protein is Chaperone protein DnaJ of Bacillus cereus (strain 03BB102).